The primary structure comprises 398 residues: Serpin-Z2A (398 aa).

Residues 343–367 form an RCL region; the sequence is GTEAAAATIAKAVLLSASPPSDMDF.

It belongs to the serpin family.

Functionally, inhibits chymotrypsin and cathepsin G in vitro. The protein is Serpin-Z2A of Triticum aestivum (Wheat).